The chain runs to 429 residues: Serine hydroxymethyltransferase (429 aa).

120-122 (GHI) is a (6S)-5,6,7,8-tetrahydrofolate binding site. At Lys226 the chain carries N6-(pyridoxal phosphate)lysine.

This sequence belongs to the SHMT family. As to quaternary structure, homodimer. Pyridoxal 5'-phosphate serves as cofactor.

Its subcellular location is the cytoplasm. It functions in the pathway amino-acid biosynthesis; glycine biosynthesis; glycine from L-serine: step 1/1. In terms of biological role, catalyzes the reversible interconversion of serine and glycine with a modified folate serving as the one-carbon carrier. Also exhibits a pteridine-independent aldolase activity toward beta-hydroxyamino acids, producing glycine and aldehydes, via a retro-aldol mechanism. This chain is Serine hydroxymethyltransferase, found in Pyrobaculum arsenaticum (strain DSM 13514 / JCM 11321 / PZ6).